The sequence spans 23 residues: Potassium channel toxin alpha-KTx 13.4 (23 aa).

3 disulfide bridges follow: Cys2–Cys15, Cys5–Cys20, and Cys9–Cys22. Positions 13–20 are interaction with Ca(2+)-activated K(+) channels; sequence GKCINGKC. Tyr23 bears the Tyrosine amide mark.

Expressed by the venom gland.

It is found in the secreted. Functionally, blocks the potassium channel Shaker B. In Tityus stigmurus (Brazilian scorpion), this protein is Potassium channel toxin alpha-KTx 13.4.